The following is a 495-amino-acid chain: Iroquois-class homeodomain protein irx-4-B (495 aa).

Positions 141 to 203 form a DNA-binding region, homeobox; TALE-type; it reads GSTRRKNATR…NARRRLKKEN (63 aa). The tract at residues 203–245 is disordered; it reads NKMTWPPRNKCSDEKRPYDEEEEEEEDSQKATIKNEKKTVDEE. Positions 235–245 are enriched in basic and acidic residues; it reads IKNEKKTVDEE.

The protein belongs to the TALE/IRO homeobox family.

It is found in the nucleus. Its function is as follows. Acts partially redundantly with other irx members in neural patterning. Required for formation of the posterior forebrain, midbrain, hindbrain, and to a lesser extent, spinal cord. Patterns the neuroectoderm in both the anterior/posterior and dorsal/ventral axes. Does not appear to play a role in pronephros kidney development. The polypeptide is Iroquois-class homeodomain protein irx-4-B (irx4-b) (Xenopus laevis (African clawed frog)).